Reading from the N-terminus, the 115-residue chain is Nucleoid-associated protein P9211_00201 (115 aa).

The protein belongs to the YbaB/EbfC family. In terms of assembly, homodimer.

It localises to the cytoplasm. It is found in the nucleoid. Binds to DNA and alters its conformation. May be involved in regulation of gene expression, nucleoid organization and DNA protection. This Prochlorococcus marinus (strain MIT 9211) protein is Nucleoid-associated protein P9211_00201.